Consider the following 409-residue polypeptide: N-acetylglucosamine-6-phosphate deacetylase (409 aa).

E143 provides a ligand contact to a divalent metal cation. Position 154-155 (154-155 (AH)) interacts with substrate. Residues H211 and H232 each contribute to the a divalent metal cation site. Substrate contacts are provided by residues 235 to 236 (NA), R243, and 269 to 272 (DGIH). The active-site Proton donor/acceptor is the D294. 328–330 (LSG) contributes to the substrate binding site.

The protein belongs to the metallo-dependent hydrolases superfamily. NagA family. It depends on a divalent metal cation as a cofactor.

It carries out the reaction N-acetyl-D-glucosamine 6-phosphate + H2O = D-glucosamine 6-phosphate + acetate. It participates in amino-sugar metabolism; N-acetylneuraminate degradation. In terms of biological role, hydrolyzes the N-glycolyl group from N-glycolylglucosamine 6-phosphate (GlcNGc-6-P) in the N-glycolylneuraminic acid (Neu5Gc) degradation pathway. This Rattus norvegicus (Rat) protein is N-acetylglucosamine-6-phosphate deacetylase (Amdhd2).